The chain runs to 81 residues: Photosystem I iron-sulfur center (81 aa).

2 4Fe-4S ferredoxin-type domains span residues 1 to 31 (MSHKVKIYDTCIGCTQCVRACPLDVLEMVPW) and 39 to 68 (IASSPRTEDCVGCKRCETACPTDFLSIRVY). Cys-11, Cys-14, Cys-17, Cys-21, Cys-48, Cys-51, Cys-54, and Cys-58 together coordinate [4Fe-4S] cluster.

In terms of assembly, the cyanobacterial PSI reaction center is composed of one copy each of PsaA,B,C,D,E,F,I,J,K,L,M and X, and forms trimeric complexes. [4Fe-4S] cluster is required as a cofactor.

The protein localises to the cellular thylakoid membrane. It catalyses the reaction reduced [plastocyanin] + hnu + oxidized [2Fe-2S]-[ferredoxin] = oxidized [plastocyanin] + reduced [2Fe-2S]-[ferredoxin]. Its function is as follows. Apoprotein for the two 4Fe-4S centers FA and FB of photosystem I (PSI); essential for photochemical activity. FB is the terminal electron acceptor of PSI, donating electrons to ferredoxin. The C-terminus interacts with PsaA/B/D and helps assemble the protein into the PSI complex. Required for binding of PsaD and PsaE to PSI. PSI is a plastocyanin/cytochrome c6-ferredoxin oxidoreductase, converting photonic excitation into a charge separation, which transfers an electron from the donor P700 chlorophyll pair to the spectroscopically characterized acceptors A0, A1, FX, FA and FB in turn. In Rippkaea orientalis (strain PCC 8801 / RF-1) (Cyanothece sp. (strain PCC 8801)), this protein is Photosystem I iron-sulfur center.